The following is a 424-amino-acid chain: Histone-binding protein RBBP7 (424 aa).

WD repeat units lie at residues 47 to 121 (QWLP…KINH), 127 to 172 (RARY…LRLR), 180 to 216 (GLSW…KIVD), 227 to 268 (VVED…HSVD), 274 to 311 (VNCL…LHSF), 317 to 368 (EIFQ…LFIH), and 375 to 402 (ISDF…IWQM). The interval 359–404 (DGPPELLFIHGGHTAKISDFSWNPNEPWVICSVSEDNIMQIWQMAE) is interaction with HAT1.

This sequence belongs to the WD repeat RBAP46/RBAP48/MSI1 family. In terms of assembly, binds directly to helix 1 of the histone fold of histone H4, a region that is not accessible when H4 is in chromatin. Also interacts with histone H2B and HAT1.

The protein localises to the nucleus. Functionally, core histone-binding subunit that may target chromatin remodeling factors, histone acetyltransferases and histone deacetylases to their histone substrates in a manner that is regulated by nucleosomal DNA. Component of several complexes which regulate chromatin metabolism. The chain is Histone-binding protein RBBP7 (RBBP7) from Gallus gallus (Chicken).